The primary structure comprises 262 residues: 3-dehydro-D-guloside 4-epimerase (262 aa).

Residue Glu146 is the Proton donor/acceptor of the active site. The Mn(2+) site is built by Glu146 and Asp179. His182 contributes to the substrate binding site. His205 contributes to the Mn(2+) binding site. Arg211 contacts substrate. Glu240 (proton donor/acceptor) is an active-site residue. Glu240 is a binding site for Mn(2+).

The protein belongs to the hyi family. It depends on Mn(2+) as a cofactor.

It catalyses the reaction a 3-dehydro-D-guloside = a 3-dehydro-D-glucoside. In terms of biological role, catalyzes the epimerization at C4 of 3-dehydro-D-gulosides leading to 3-dehydro-D-glucosides. Probably functions in a metabolic pathway that transforms D-gulosides to D-glucosides. Can use methyl alpha-3-dehydro-D-glucoside and methyl beta-3-dehydro-D-glucoside as substrates in vitro. However, the actual specific physiological substrates for this metabolic pathway are unknown. Cannot act on D-psicose, D-fructose, D-tagatose, D-sorbose, L-xylulose, or L-ribulose. This is 3-dehydro-D-guloside 4-epimerase (ycjR) from Escherichia coli (strain K12).